Here is a 306-residue protein sequence, read N- to C-terminus: tRNA dimethylallyltransferase (306 aa).

Residue 9–16 (GPTGIGKT) participates in ATP binding. 11–16 (TGIGKT) serves as a coordination point for substrate. The segment at 34–37 (DSMQ) is interaction with substrate tRNA.

It belongs to the IPP transferase family. Monomer. Mg(2+) is required as a cofactor.

The catalysed reaction is adenosine(37) in tRNA + dimethylallyl diphosphate = N(6)-dimethylallyladenosine(37) in tRNA + diphosphate. Its function is as follows. Catalyzes the transfer of a dimethylallyl group onto the adenine at position 37 in tRNAs that read codons beginning with uridine, leading to the formation of N6-(dimethylallyl)adenosine (i(6)A). The chain is tRNA dimethylallyltransferase from Lactobacillus johnsonii (strain CNCM I-12250 / La1 / NCC 533).